A 1615-amino-acid chain; its full sequence is ABC transporter A family member 4 (1615 aa).

Helical transmembrane passes span 30-50 (ILLPLISIGILFGILYLSMII), 233-253 (GVFITASLFATLFTLITNIVI), 278-298 (SIISLITLLSSTLLVSIILSA), 308-328 (ITLILILIPYSITLLLIAFIL), 337-357 (YAGLMAFLIVLLLSGIGIIIG), 365-385 (LKLLSCLFSPIAISVANYVWC), and 405-425 (YEIIGMLVFDIFLYILILWYL). An ABC transmembrane type-2 domain is found at 182–383 (TQIQTGVDQA…PIAISVANYV (202 aa)). The region spanning 492-727 (ISIRNLRKEF…FGVGYLLTIS (236 aa)) is the ABC transporter 1 domain. 528–535 (GPNGSGKS) serves as a coordination point for ATP. 7 consecutive transmembrane segments (helical) span residues 855–875 (IKSFVLSILIPILILAGGLIL), 1022–1042 (FVAIVFFIILTLASFSLIAAS), 1075–1095 (IWDYLQTFILVIFLTIVIIAV), 1106–1126 (YISGVVLFTFSIIPLSYLMSF), 1135–1155 (VGAIFAIHFGVGLIFTVISFI), 1174–1194 (IIEYCFYAISPFFCFSKILAI), and 1218–1238 (LLPNAILFLHCIVWITWILLI). The region spanning 1293 to 1528 (IIFNNLYKKF…FGSGYSIEVK (236 aa)) is the ABC transporter 2 domain. 1331–1338 (GLNGCGKS) is a binding site for ATP.

It belongs to the ABC transporter superfamily. ABCA family.

The protein resides in the membrane. In Dictyostelium discoideum (Social amoeba), this protein is ABC transporter A family member 4 (abcA4).